The sequence spans 352 residues: Ubiquitin thioesterase otulin (352 aa).

Residues 1-48 (MSRGTMPQPEAWPGASCAETPAREAAATARDGGKAAASGQPRPEMQCP) are disordered. The segment covering 18–37 (AETPAREAAATARDGGKAAA) has biased composition (low complexity). Positions 52-57 (EEDMYR) match the PIM motif motif. Y56 carries the post-translational modification Phosphotyrosine. Linear diubiquitin binding stretches follow at residues 95–96 (EW) and 124–126 (RGD). In terms of domain architecture, OTU spans 118–346 (TSIRRVRGDN…DRHYNIPVRV (229 aa)). Residue D126 is part of the active site. The active-site Nucleophile is the C129. Linear diubiquitin binding stretches follow at residues 255-259 (FFSVL), 283-289 (TGGLEQV), and 336-338 (DDR). H339 is an active-site residue.

This sequence belongs to the peptidase C65 family. Otulin subfamily. Interacts (via the PUB domain) with RNF31 (via the PIM motif); the interaction is direct. Interacts with DVL2. Post-translationally, ubiquitinated. In terms of processing, acetylated. Phosphorylated. Phosphorylation at Tyr-56 prevents interaction with RNF31; dephosphorylation promotes interaction with RNF31 and the LUBAC complex.

It localises to the cytoplasm. The enzyme catalyses Thiol-dependent hydrolysis of ester, thioester, amide, peptide and isopeptide bonds formed by the C-terminal Gly of ubiquitin (a 76-residue protein attached to proteins as an intracellular targeting signal).. Functionally, deubiquitinase that specifically removes linear ('Met-1'-linked) polyubiquitin chains to substrates and acts as a regulator of angiogenesis and innate immune response. Required during angiogenesis, craniofacial and neuronal development by regulating the canonical Wnt signaling together with the LUBAC complex. Acts as a negative regulator of NF-kappa-B by regulating the activity of the LUBAC complex. OTULIN function is mainly restricted to homeostasis of the LUBAC complex: acts by removing 'Met-1'-linked autoubiquitination of the LUBAC complex, thereby preventing inactivation of the LUBAC complex. Acts as a key negative regulator of inflammation by restricting spontaneous inflammation and maintaining immune homeostasis. In myeloid cell, required to prevent unwarranted secretion of cytokines leading to inflammation and autoimmunity by restricting linear polyubiquitin formation. Plays a role in innate immune response by restricting linear polyubiquitin formation on LUBAC complex in response to NOD2 stimulation, probably to limit NOD2-dependent pro-inflammatory signaling. The polypeptide is Ubiquitin thioesterase otulin (Homo sapiens (Human)).